Consider the following 151-residue polypeptide: Small ribosomal subunit protein uS15 (151 aa).

The disordered stretch occupies residues 1-20 (MGRMHSNGKGISGSSLPYNR).

This sequence belongs to the universal ribosomal protein uS15 family. In terms of assembly, component of the small ribosomal subunit. Part of the small subunit (SSU) processome, composed of more than 70 proteins and the RNA chaperone small nucleolar RNA (snoRNA) U3.

The protein resides in the cytoplasm. It is found in the nucleus. It localises to the nucleolus. Its function is as follows. Component of the small ribosomal subunit. The ribosome is a large ribonucleoprotein complex responsible for the synthesis of proteins in the cell. Part of the small subunit (SSU) processome, first precursor of the small eukaryotic ribosomal subunit. During the assembly of the SSU processome in the nucleolus, many ribosome biogenesis factors, an RNA chaperone and ribosomal proteins associate with the nascent pre-rRNA and work in concert to generate RNA folding, modifications, rearrangements and cleavage as well as targeted degradation of pre-ribosomal RNA by the RNA exosome. This Dictyostelium discoideum (Social amoeba) protein is Small ribosomal subunit protein uS15 (rps13).